The chain runs to 791 residues: GDH/6PGL endoplasmic bifunctional protein (791 aa).

A signal peptide spans 1–19; sequence MWNMLIVAMCLALLGCLQA. Q20 is modified (pyrrolidone carboxylic acid). The interval 20 to 526 is hexose-6-phosphate dehydrogenase; that stretch reads QELQGHVSII…SGRLFFSQQQ (507 aa). NADP(+) is bound by residues 32-39 and Y149; that span reads GATGDLAK. N157 carries N-linked (GlcNAc...) asparagine glycosylation. K174 contributes to the NADP(+) binding site. Residues K174, 204-208, E243, and D262 each bind D-glucose 6-phosphate; that span reads HYLGK. An N6-succinyllysine modification is found at K208. Residue H267 is the Proton acceptor of the active site. N282 carries N-linked (GlcNAc...) asparagine glycosylation. The D-glucose 6-phosphate site is built by K360 and R365. R370 is a binding site for NADP(+). Positions 527-540 are linker; sequence PEQLVPGPGPAPMP. The interval 541–791 is 6-phosphogluconolactonase; the sequence is SDFQVLRAKY…WYMDYDAFLG (251 aa). Position 617 (W617) interacts with NADP(+). N-linked (GlcNAc...) asparagine glycosylation is present at N683.

It in the N-terminal section; belongs to the glucose-6-phosphate dehydrogenase family. This sequence in the C-terminal section; belongs to the glucosamine/galactosamine-6-phosphate isomerase family. 6-phosphogluconolactonase subfamily. As to quaternary structure, homodimer. Present in most tissues examined, strongest in liver.

It localises to the endoplasmic reticulum lumen. The catalysed reaction is D-glucose 6-phosphate + NADP(+) = 6-phospho-D-glucono-1,5-lactone + NADPH + H(+). The enzyme catalyses D-glucose 6-phosphate + NAD(+) = 6-phospho-D-glucono-1,5-lactone + NADH + H(+). It carries out the reaction 6-phospho-D-glucono-1,5-lactone + H2O = 6-phospho-D-gluconate + H(+). It catalyses the reaction 2-deoxy-D-glucose 6-phosphate + NAD(+) = 2-deoxy-6-phospho-D-glucono-1,5-lactone + NADH + H(+). The catalysed reaction is 2-deoxy-D-glucose 6-phosphate + NADP(+) = 2-deoxy-6-phospho-D-glucono-1,5-lactone + NADPH + H(+). The enzyme catalyses D-galactose 6-phosphate + NADP(+) = 6-phospho-D-galactono-1,5-lactone + NADPH + H(+). It carries out the reaction D-galactose 6-phosphate + NAD(+) = 6-phospho-D-galactono-1,5-lactone + NADH + H(+). It catalyses the reaction D-glucosamine 6-phosphate + NADP(+) = 2-amino-2-deoxy-6-phospho-D-glucono-1,5-lactone + NADPH + 2 H(+). The catalysed reaction is D-glucose + NAD(+) = D-glucono-1,5-lactone + NADH + H(+). The enzyme catalyses D-glucose + NADP(+) = D-glucono-1,5-lactone + NADPH + H(+). It carries out the reaction D-glucose 6-sulfate + NADP(+) = 6-sulfo-D-glucono-1,5-lactone + NADPH + H(+). It participates in carbohydrate degradation; pentose phosphate pathway; D-ribulose 5-phosphate from D-glucose 6-phosphate (oxidative stage): step 1/3. The protein operates within carbohydrate degradation; pentose phosphate pathway; D-ribulose 5-phosphate from D-glucose 6-phosphate (oxidative stage): step 2/3. It functions in the pathway carbohydrate degradation; pentose phosphate pathway; D-ribulose 5-phosphate from D-glucose 6-phosphate (oxidative stage). Bifunctional enzyme localized in the lumen of the endoplasmic reticulum that catalyzes the first two steps of the oxidative branch of the pentose phosphate pathway/shunt, an alternative to glycolysis and a major source of reducing power and metabolic intermediates for biosynthetic processes. Has a hexose-6-phosphate dehydrogenase activity, with broad substrate specificity compared to glucose-6-phosphate 1-dehydrogenase/G6PD, and catalyzes the first step of the pentose phosphate pathway. In addition, acts as a 6-phosphogluconolactonase and catalyzes the second step of the pentose phosphate pathway. May have a dehydrogenase activity for alternative substrates including glucosamine 6-phosphate and glucose 6-sulfate. The main function of this enzyme is to provide reducing equivalents such as NADPH to maintain the adequate levels of reductive cofactors in the oxidizing environment of the endoplasmic reticulum. By producing NADPH that is needed by reductases of the lumen of the endoplasmic reticulum like corticosteroid 11-beta-dehydrogenase isozyme 1/HSD11B1, indirectly regulates their activity. In Homo sapiens (Human), this protein is GDH/6PGL endoplasmic bifunctional protein.